A 101-amino-acid chain; its full sequence is Small ribosomal subunit protein uS14 (101 aa).

It belongs to the universal ribosomal protein uS14 family. Part of the 30S ribosomal subunit. Contacts proteins S3 and S10.

Functionally, binds 16S rRNA, required for the assembly of 30S particles and may also be responsible for determining the conformation of the 16S rRNA at the A site. The sequence is that of Small ribosomal subunit protein uS14 from Polaromonas naphthalenivorans (strain CJ2).